The primary structure comprises 87 residues: Small ribosomal subunit protein eS21 (87 aa).

It belongs to the eukaryotic ribosomal protein eS21 family. In terms of assembly, component of the small ribosomal subunit (SSU). Mature N.crassa ribosomes consist of a small (40S) and a large (60S) subunit. The 40S small subunit contains 1 molecule of ribosomal RNA (18S rRNA) and at least 32 different proteins. The large 60S subunit contains 3 rRNA molecules (26S, 5.8S and 5S rRNA) and at least 42 different proteins.

It localises to the cytoplasm. Functionally, component of the ribosome, a large ribonucleoprotein complex responsible for the synthesis of proteins in the cell. The small ribosomal subunit (SSU) binds messenger RNAs (mRNAs) and translates the encoded message by selecting cognate aminoacyl-transfer RNA (tRNA) molecules. The large subunit (LSU) contains the ribosomal catalytic site termed the peptidyl transferase center (PTC), which catalyzes the formation of peptide bonds, thereby polymerizing the amino acids delivered by tRNAs into a polypeptide chain. The nascent polypeptides leave the ribosome through a tunnel in the LSU and interact with protein factors that function in enzymatic processing, targeting, and the membrane insertion of nascent chains at the exit of the ribosomal tunnel. This Neurospora crassa (strain ATCC 24698 / 74-OR23-1A / CBS 708.71 / DSM 1257 / FGSC 987) protein is Small ribosomal subunit protein eS21 (crp-7).